Consider the following 141-residue polypeptide: Protein C19orf12 homolog (141 aa).

Residues 37-57 (GLAFAGGLIGGPLGIAVGGAV) traverse the membrane as a helical segment.

The protein belongs to the C19orf12 family.

The protein resides in the mitochondrion. It localises to the mitochondrion membrane. Its subcellular location is the endoplasmic reticulum. The protein localises to the cytoplasm. It is found in the cytosol. The polypeptide is Protein C19orf12 homolog (Danio rerio (Zebrafish)).